Consider the following 581-residue polypeptide: MRNHVSRYLTALIAVGCAATTAACTSLPSNSEPQALRSFEASASEEPQGPVEDQEPDLLLRDFYEANNNPQQRYSLARRYLTHRASQSWNPAPETLVLDGIEINSAADSSTKNRRYDVRGLIVGSIGEGGEYRPRNERYSTTIGLEKVDGQWRISTLPDQIVVQRNELWNHYRQKQVYFFDTSGTTLVADRRWIFQEKMGHNDNHESALLSLILTGPSKSLAPGVVNEVPSGAAYAGYHDDYYQFTGLSSLDEDSLKRLTAQSVWTLALAEVPGPYRFKFDGATMKSPINGSEDLTVDDFAEYNPLPQQAVDSGLYAFNSNGVKKLNQGVATPTTGTLGNTHNIESMAVSAKTGATAAVRTAVEGDAKTSTLMLGPIGGQFVDVLKARRLTSPSFELSSSSLWVVKDSDQVVRLSRSSENEGIVETVVDTSELGSLGKNISALQLSRSGVRAAFIVDGSVYTATVARPNPGQRKLVNVQEIIPSLANVAQSLAWQPNGSLIIGTSKPDAPVWIVAQDGSLGSKLSAGNIVAPVMNVAASQSTLYISDARAALELPNSDTSTTYWREVQGLEGSRSVLVVPR.

Residues 1 to 23 form the signal peptide; the sequence is MRNHVSRYLTALIAVGCAATTAA. Cysteine 24 carries the N-palmitoyl cysteine lipid modification. Cysteine 24 carries the S-diacylglycerol cysteine lipid modification.

It belongs to the LpqB lipoprotein family.

It is found in the cell membrane. This chain is Lipoprotein LpqB, found in Corynebacterium diphtheriae (strain ATCC 700971 / NCTC 13129 / Biotype gravis).